A 298-amino-acid chain; its full sequence is ATP synthase gamma chain (298 aa).

This sequence belongs to the ATPase gamma chain family. In terms of assembly, F-type ATPases have 2 components, CF(1) - the catalytic core - and CF(0) - the membrane proton channel. CF(1) has five subunits: alpha(3), beta(3), gamma(1), delta(1), epsilon(1). CF(0) has three main subunits: a, b and c.

It is found in the cell inner membrane. Its function is as follows. Produces ATP from ADP in the presence of a proton gradient across the membrane. The gamma chain is believed to be important in regulating ATPase activity and the flow of protons through the CF(0) complex. This is ATP synthase gamma chain from Desulforapulum autotrophicum (strain ATCC 43914 / DSM 3382 / VKM B-1955 / HRM2) (Desulfobacterium autotrophicum).